We begin with the raw amino-acid sequence, 215 residues long: 3-isopropylmalate dehydratase small subunit (215 aa).

This sequence belongs to the LeuD family. LeuD type 1 subfamily. As to quaternary structure, heterodimer of LeuC and LeuD.

The enzyme catalyses (2R,3S)-3-isopropylmalate = (2S)-2-isopropylmalate. It participates in amino-acid biosynthesis; L-leucine biosynthesis; L-leucine from 3-methyl-2-oxobutanoate: step 2/4. Its function is as follows. Catalyzes the isomerization between 2-isopropylmalate and 3-isopropylmalate, via the formation of 2-isopropylmaleate. The protein is 3-isopropylmalate dehydratase small subunit of Saccharophagus degradans (strain 2-40 / ATCC 43961 / DSM 17024).